Consider the following 225-residue polypeptide: ATP-dependent Clp protease proteolytic subunit (225 aa).

Catalysis depends on Ser101, which acts as the Nucleophile. His126 is an active-site residue.

Belongs to the peptidase S14 family. As to quaternary structure, component of the chloroplastic Clp protease core complex.

It localises to the plastid. The protein resides in the chloroplast stroma. It carries out the reaction Hydrolysis of proteins to small peptides in the presence of ATP and magnesium. alpha-casein is the usual test substrate. In the absence of ATP, only oligopeptides shorter than five residues are hydrolyzed (such as succinyl-Leu-Tyr-|-NHMec, and Leu-Tyr-Leu-|-Tyr-Trp, in which cleavage of the -Tyr-|-Leu- and -Tyr-|-Trp bonds also occurs).. Functionally, cleaves peptides in various proteins in a process that requires ATP hydrolysis. Has a chymotrypsin-like activity. Plays a major role in the degradation of misfolded proteins. In Chlorokybus atmophyticus (Soil alga), this protein is ATP-dependent Clp protease proteolytic subunit.